A 196-amino-acid chain; its full sequence is Putative 3-methyladenine DNA glycosylase (196 aa).

The protein belongs to the DNA glycosylase MPG family.

In Chlorobium phaeobacteroides (strain DSM 266 / SMG 266 / 2430), this protein is Putative 3-methyladenine DNA glycosylase.